We begin with the raw amino-acid sequence, 100 residues long: Small ribosomal subunit protein uS14m (100 aa).

This sequence belongs to the universal ribosomal protein uS14 family.

The protein resides in the mitochondrion. The polypeptide is Small ribosomal subunit protein uS14m (RPS14) (Brassica napus (Rape)).